Here is a 159-residue protein sequence, read N- to C-terminus: MAKEQGTKPIAQNKKARHDYAIEDKYEAGLVLTGTEVKSLREGRASLAESFITIDRRGEMWLEGANIPEYLNGTWNNHAPKRKRKLLLHAAQIDKLARQTQAKGFTIIPLSLYFKDGRVKVEIALARGKKEFDKRQSLREEQDKREALRAMRYANKQVR.

This sequence belongs to the SmpB family.

It is found in the cytoplasm. In terms of biological role, required for rescue of stalled ribosomes mediated by trans-translation. Binds to transfer-messenger RNA (tmRNA), required for stable association of tmRNA with ribosomes. tmRNA and SmpB together mimic tRNA shape, replacing the anticodon stem-loop with SmpB. tmRNA is encoded by the ssrA gene; the 2 termini fold to resemble tRNA(Ala) and it encodes a 'tag peptide', a short internal open reading frame. During trans-translation Ala-aminoacylated tmRNA acts like a tRNA, entering the A-site of stalled ribosomes, displacing the stalled mRNA. The ribosome then switches to translate the ORF on the tmRNA; the nascent peptide is terminated with the 'tag peptide' encoded by the tmRNA and targeted for degradation. The ribosome is freed to recommence translation, which seems to be the essential function of trans-translation. This Bifidobacterium adolescentis (strain ATCC 15703 / DSM 20083 / NCTC 11814 / E194a) protein is SsrA-binding protein.